Here is a 128-residue protein sequence, read N- to C-terminus: Ribonuclease pancreatic B (128 aa).

Residues 1–21 (AESSAMKFQRQHMDPEGSPSN) form a disordered region. Positions 7 and 10 each coordinate substrate. Histidine 12 serves as the catalytic Proton acceptor. Residues asparagine 21 and asparagine 34 are each glycosylated (N-linked (GlcNAc...) asparagine). Intrachain disulfides connect cysteine 26–cysteine 84, cysteine 40–cysteine 95, cysteine 58–cysteine 110, and cysteine 65–cysteine 72. Substrate-binding positions include 41 to 45 (KPVNT), lysine 66, and arginine 85. The Proton donor role is filled by histidine 119.

The protein belongs to the pancreatic ribonuclease family. As to expression, pancreas.

The protein localises to the secreted. It catalyses the reaction an [RNA] containing cytidine + H2O = an [RNA]-3'-cytidine-3'-phosphate + a 5'-hydroxy-ribonucleotide-3'-[RNA].. The catalysed reaction is an [RNA] containing uridine + H2O = an [RNA]-3'-uridine-3'-phosphate + a 5'-hydroxy-ribonucleotide-3'-[RNA].. This is Ribonuclease pancreatic B from Cavia porcellus (Guinea pig).